The sequence spans 92 residues: Small ribosomal subunit protein uS19 (92 aa).

It belongs to the universal ribosomal protein uS19 family.

Its function is as follows. Protein S19 forms a complex with S13 that binds strongly to the 16S ribosomal RNA. The chain is Small ribosomal subunit protein uS19 from Borreliella afzelii (strain PKo) (Borrelia afzelii).